Consider the following 274-residue polypeptide: tRNA (guanine-N(7)-)-methyltransferase (274 aa).

The interval 16 to 40 is disordered; the sequence is ASASRGAATGSRGVAPAVPRGGAPA. Residues Glu-106, Glu-131, Asp-158, and Asp-181 each contribute to the S-adenosyl-L-methionine site. Asp-181 is a catalytic residue. Substrate-binding positions include Lys-185, Asp-217, and 252 to 255; that span reads TKFE.

This sequence belongs to the class I-like SAM-binding methyltransferase superfamily. TrmB family.

It catalyses the reaction guanosine(46) in tRNA + S-adenosyl-L-methionine = N(7)-methylguanosine(46) in tRNA + S-adenosyl-L-homocysteine. It functions in the pathway tRNA modification; N(7)-methylguanine-tRNA biosynthesis. In terms of biological role, catalyzes the formation of N(7)-methylguanine at position 46 (m7G46) in tRNA. In Verminephrobacter eiseniae (strain EF01-2), this protein is tRNA (guanine-N(7)-)-methyltransferase.